We begin with the raw amino-acid sequence, 431 residues long: Adenylosuccinate synthetase (431 aa).

Residues 13–19 (GDEGKGK) and 41–43 (GHT) contribute to the GTP site. Residue aspartate 14 is the Proton acceptor of the active site. Aspartate 14 and glycine 41 together coordinate Mg(2+). Residues 14–17 (DEGK), 39–42 (NAGH), threonine 130, arginine 144, glutamine 225, threonine 240, and arginine 304 each bind IMP. Catalysis depends on histidine 42, which acts as the Proton donor. Substrate is bound at residue 300–306 (ATTGRKR). GTP-binding positions include arginine 306, 332-334 (KLD), and 415-417 (STG).

The protein belongs to the adenylosuccinate synthetase family. As to quaternary structure, homodimer. The cofactor is Mg(2+).

It localises to the cytoplasm. The enzyme catalyses IMP + L-aspartate + GTP = N(6)-(1,2-dicarboxyethyl)-AMP + GDP + phosphate + 2 H(+). The protein operates within purine metabolism; AMP biosynthesis via de novo pathway; AMP from IMP: step 1/2. In terms of biological role, plays an important role in the de novo pathway of purine nucleotide biosynthesis. Catalyzes the first committed step in the biosynthesis of AMP from IMP. The sequence is that of Adenylosuccinate synthetase from Shewanella frigidimarina (strain NCIMB 400).